Here is a 231-residue protein sequence, read N- to C-terminus: Large ribosomal subunit protein uL1 (231 aa).

The protein belongs to the universal ribosomal protein uL1 family. In terms of assembly, part of the 50S ribosomal subunit.

Functionally, binds directly to 23S rRNA. The L1 stalk is quite mobile in the ribosome, and is involved in E site tRNA release. In terms of biological role, protein L1 is also a translational repressor protein, it controls the translation of the L11 operon by binding to its mRNA. This is Large ribosomal subunit protein uL1 from Alkalilimnicola ehrlichii (strain ATCC BAA-1101 / DSM 17681 / MLHE-1).